We begin with the raw amino-acid sequence, 68 residues long: Large ribosomal subunit protein bL35 (68 aa).

This sequence belongs to the bacterial ribosomal protein bL35 family.

The polypeptide is Large ribosomal subunit protein bL35 (Orientia tsutsugamushi (strain Boryong) (Rickettsia tsutsugamushi)).